A 338-amino-acid polypeptide reads, in one-letter code: UPF0324 membrane protein HI_1643 (338 aa).

Helical transmembrane passes span 5–23 (PFYFGLIFIAIIAVLANYL), 33–55 (HISALIIAILLGMAIGNTIYPQF), 62–84 (GVLFAKGTLLRAGIVLYGFRLTF), 94–116 (AVVTDAIMLISTFFLTALLGIRY), 123–145 (LVYLTGAGCSICGAAAVMAAEPV), 155–177 (VAIAVVVIFGTLSIFTYPFFYTW), 222–239 (LRVMMLAPFLFMLSWLLT), 254–273 (IPWFAVLFIGVAIFNSFDLL), 280–302 (LFVEIDSFLLISAMAALGLTTQA), and 312–334 (PLVLGVLIYLWLVIGGFLVNYGI).

This sequence belongs to the UPF0324 family.

It is found in the cell membrane. This is UPF0324 membrane protein HI_1643 from Haemophilus influenzae (strain ATCC 51907 / DSM 11121 / KW20 / Rd).